Here is a 142-residue protein sequence, read N- to C-terminus: Nucleoside diphosphate kinase (142 aa).

6 residues coordinate ATP: Lys-11, Phe-59, Arg-87, Thr-93, Arg-104, and Asn-114. His-117 serves as the catalytic Pros-phosphohistidine intermediate.

The protein belongs to the NDK family. In terms of assembly, homotetramer. Mg(2+) serves as cofactor.

The protein localises to the cytoplasm. It catalyses the reaction a 2'-deoxyribonucleoside 5'-diphosphate + ATP = a 2'-deoxyribonucleoside 5'-triphosphate + ADP. The enzyme catalyses a ribonucleoside 5'-diphosphate + ATP = a ribonucleoside 5'-triphosphate + ADP. Major role in the synthesis of nucleoside triphosphates other than ATP. The ATP gamma phosphate is transferred to the NDP beta phosphate via a ping-pong mechanism, using a phosphorylated active-site intermediate. The protein is Nucleoside diphosphate kinase of Thiobacillus denitrificans (strain ATCC 25259 / T1).